The sequence spans 1190 residues: Phosphatidylinositol-3,5-bisphosphate 3-phosphatase MTMR4 (1190 aa).

A Phosphoserine modification is found at Ser-8. The region spanning 153-570 (EHIRCRQEAE…RALHLWTAVY (418 aa)) is the Myotubularin phosphatase domain. A 1,2-diacyl-sn-glycero-3-phospho-(1D-myo-inositol-3,5-bisphosphate) contacts are provided by Asn-320, Asn-345, and Ile-346. A 1,2-diacyl-sn-glycero-3-phospho-(1D-myo-inositol-3-phosphate)-binding residues include Asn-320, Asn-345, and Ile-346. Cys-407 serves as the catalytic Phosphocysteine intermediate. 8 residues coordinate a 1,2-diacyl-sn-glycero-3-phospho-(1D-myo-inositol-3,5-bisphosphate): Ser-408, Asp-409, Gly-410, Trp-411, Asp-412, Arg-413, Lys-449, and Arg-453. The a 1,2-diacyl-sn-glycero-3-phospho-(1D-myo-inositol-3-phosphate) site is built by Ser-408, Asp-409, Gly-410, Trp-411, Asp-412, and Arg-413. A 1,2-diacyl-sn-glycero-3-phospho-(1D-myo-inositol-3-phosphate) is bound at residue Arg-453. Phosphoserine is present on residues Ser-610 and Ser-629. Disordered stretches follow at residues 616-694 (SACD…FKGH), 724-749 (ETEALAPDPSAQEEQGRTSDGLGKPP), and 773-848 (DFPE…PSSV). Over residues 618 to 637 (CDTSSPLTRTSSDPNLNNHS) the composition is skewed to polar residues. The segment covering 782-847 (LTGTPQQPHL…SISHQEQPSS (66 aa)) has biased composition (polar residues). The PY-motif; substrate motif for NEDD4 signature appears at 999-1003 (VPPLY). Positions 1020 to 1052 (LRQIEAGYRQEVEQLRRQVRELQMRLDIRHCCA) form a coiled coil. An FYVE-type zinc finger spans residues 1109–1169 (DHMASHCFNC…VCNSCYEHIQ (61 aa)). Positions 1115, 1118, 1131, 1134, 1139, 1142, 1161, and 1164 each coordinate Zn(2+).

This sequence belongs to the protein-tyrosine phosphatase family. Non-receptor class myotubularin subfamily. Homooligomeric. Forms MTMR3:MTMR4 heterooligomers; regulates the localization of both proteins. The MTMR3:MTMR4 heterooligomer can also recruit both CEP55 and PLK1; occurs during early mitosis, regulates the phosphorylation of CEP55 by PLK1 and its recruitment to the midbody where it can mediate cell abscission. Interacts with SMAD2 and SMAD3; negatively regulates TGF-beta signaling through SMAD2 and SMAD3 dephosphorylation and retention in endosomes. Interacts with SMAD1; negatively regulates BMP signaling through SMAD1 dephosphorylation and retention in endosomes. In terms of processing, ubiquitinated. Ubiquitination by NEDD4 probably leads to proteasomal degradation. Phosphorylated by CDK1 during mitosis.

The protein resides in the early endosome membrane. The protein localises to the recycling endosome membrane. It is found in the late endosome membrane. It localises to the cytoplasmic vesicle. Its subcellular location is the phagosome membrane. It carries out the reaction a 1,2-diacyl-sn-glycero-3-phospho-(1D-myo-inositol-3-phosphate) + H2O = a 1,2-diacyl-sn-glycero-3-phospho-(1D-myo-inositol) + phosphate. It catalyses the reaction a 1,2-diacyl-sn-glycero-3-phospho-(1D-myo-inositol-3,5-bisphosphate) + H2O = a 1,2-diacyl-sn-glycero-3-phospho-(1D-myo-inositol-5-phosphate) + phosphate. The catalysed reaction is 1,2-dioctanoyl-sn-glycero-3-phospho-(1-D-myo-inositol-3-phosphate) + H2O = 1,2-dioctanoyl-sn-glycero-3-phospho-(1D-myo-inositol) + phosphate. The enzyme catalyses 1,2-dioctanoyl-sn-glycero-3-phospho-(1D-myo-inositol-3,5-bisphosphate) + H2O = 1,2-dioctanoyl-sn-glycero-3-phospho-(1D-myo-inositol-5-phosphate) + phosphate. Its function is as follows. Lipid phosphatase that specifically dephosphorylates the D-3 position of phosphatidylinositol 3-phosphate and phosphatidylinositol 3,5-bisphosphate, generating phosphatidylinositol and phosphatidylinositol 5-phosphate. Decreases the levels of phosphatidylinositol 3-phosphate, a phospholipid found in cell membranes where it acts as key regulator of both cell signaling and intracellular membrane traffic, in a subset of endosomal membranes to negatively regulate both endocytic recycling and trafficking and/or maturation of endosomes toward lysosomes. Through phosphatidylinositol 3-phosphate turnover in phagosome membranes regulates phagocytosis and phagosome maturation. By decreasing phosphatidylinositol 3-monophosphate (PI3P) levels in immune cells it can also regulate the innate immune response. Beside its lipid phosphatase activity, can also function as a molecular adapter to regulate midbody abscission during mitotic cytokinesis. Can also negatively regulate TGF-beta and BMP signaling through Smad proteins dephosphorylation and retention in endosomes. The sequence is that of Phosphatidylinositol-3,5-bisphosphate 3-phosphatase MTMR4 from Mus musculus (Mouse).